A 486-amino-acid polypeptide reads, in one-letter code: ATP synthase subunit beta (486 aa).

167 to 174 (GGAGVGKT) serves as a coordination point for ATP.

Belongs to the ATPase alpha/beta chains family. F-type ATPases have 2 components, CF(1) - the catalytic core - and CF(0) - the membrane proton channel. CF(1) has five subunits: alpha(3), beta(3), gamma(1), delta(1), epsilon(1). CF(0) has three main subunits: a(1), b(2) and c(9-12). The alpha and beta chains form an alternating ring which encloses part of the gamma chain. CF(1) is attached to CF(0) by a central stalk formed by the gamma and epsilon chains, while a peripheral stalk is formed by the delta and b chains.

Its subcellular location is the cell inner membrane. The catalysed reaction is ATP + H2O + 4 H(+)(in) = ADP + phosphate + 5 H(+)(out). Functionally, produces ATP from ADP in the presence of a proton gradient across the membrane. The catalytic sites are hosted primarily by the beta subunits. This is ATP synthase subunit beta from Anaplasma marginale (strain St. Maries).